Consider the following 270-residue polypeptide: Phosphatidylinositol transfer protein alpha isoform (270 aa).

Thr58, Lys60, Glu85, Asn89, Thr96, and Lys194 together coordinate a 1,2-diacyl-sn-glycero-3-phospho-(1D-myo-inositol). N6-acetyllysine is present on Lys215. The segment covering 250–263 (TKRQLDEMRQKDPV) has biased composition (basic and acidic residues). The interval 250–270 (TKRQLDEMRQKDPVKGMTADD) is disordered.

This sequence belongs to the PtdIns transfer protein family. PI transfer class I subfamily.

The protein resides in the cytoplasm. Its subcellular location is the nucleus. It catalyses the reaction a 1,2-diacyl-sn-glycero-3-phosphocholine(in) = a 1,2-diacyl-sn-glycero-3-phosphocholine(out). The enzyme catalyses a 1,2-diacyl-sn-glycero-3-phospho-(1D-myo-inositol)(in) = a 1,2-diacyl-sn-glycero-3-phospho-(1D-myo-inositol)(out). Its activity is regulated as follows. Phosphatidylinositol transfer activity is inhibited by N-ethylmaleimide. In terms of biological role, catalyzes the transfer of phosphatidylinositol (PI) and phosphatidylcholine (PC) between membranes. Shows a preference for PI and PC containing shorter saturated or monosaturated acyl chains at the sn-1 and sn-2 positions. Preference order for PC is C16:1 &gt; C16:0 &gt; C18:1 &gt; C18:0 &gt; C20:4 and for PI is C16:1 &gt; C16:0 &gt; C18:1 &gt; C18:0 &gt; C20:4 &gt; C20:3. This chain is Phosphatidylinositol transfer protein alpha isoform (PITPNA), found in Homo sapiens (Human).